The following is a 3084-amino-acid chain: Protein prune homolog 2 (3084 aa).

An N-acetylmethionine modification is found at methionine 1. Positions 109–111 (GSH) match the DHH motif motif. Disordered stretches follow at residues 394-417 (QPSS…QADG), 430-465 (TIRS…PGFD), 500-536 (ASEQ…PKGL), 672-733 (EQES…QKEE), 811-837 (KNTW…MGQS), 861-907 (EIWG…KATG), 947-1080 (SASN…DDPS), 1224-1316 (NMPS…GQSE), 1338-1395 (SGVN…LEVE), 1502-1543 (MNST…DLHD), 1600-1652 (GFGK…TTKR), 1776-1799 (ETGT…DPDK), 1836-1886 (GELE…GDKS), 1961-1980 (DENG…QENQ), 2071-2196 (ILTH…NPEV), 2410-2782 (MLLS…SHPR), 2797-2816 (QSEG…EIDI), and 2825-2859 (DEAD…AEEE). The segment covering 501 to 511 (SEQSQPSSHSA) has biased composition (polar residues). 2 stretches are compositionally biased toward basic and acidic residues: residues 682-696 (PWKD…RRTS) and 723-733 (GNKEAQDQKEE). Composition is skewed to polar residues over residues 811–828 (KNTW…SGQE) and 865–891 (KNNS…NNSK). Residues 962-975 (TNYSTSDSYTSPTY) show a composition bias toward low complexity. Residues 977–999 (GDEKEIANKPVDKDNGFEAKDAE) show a composition bias toward basic and acidic residues. The segment covering 1009 to 1019 (ATSSQQSQRNR) has biased composition (polar residues). A compositionally biased stretch (basic and acidic residues) spans 1034–1063 (HTEDKPEGNDAHHPDSDALKTEHAEDKNAS). Low complexity predominate over residues 1071-1080 (SSPSSYDDPS). Basic and acidic residues predominate over residues 1248–1261 (SPRHSNGKDSHMLE). Polar residues predominate over residues 1265 to 1294 (LSESGGLTSQPVNQDTWGDSQGDTASSVTG). Residues 1350–1366 (KPRDQEFSSSDAFEHQD) are compositionally biased toward basic and acidic residues. Residues 1368–1378 (SSASGKISSLS) are compositionally biased toward low complexity. 3 stretches are compositionally biased toward polar residues: residues 1779-1792 (TMDT…STEA), 1854-1869 (PIQN…STNP), and 1965-1980 (CVST…QENQ). Residues 2089-2103 (VCHDSEGEQKMEKHT) show a composition bias toward basic and acidic residues. The segment covering 2162–2174 (SSKPASSRSSPEP) has biased composition (low complexity). Basic and acidic residues-rich tracts occupy residues 2416–2428 (PDHR…ETNI), 2506–2525 (KQTE…EDHQ), and 2535–2553 (SHEK…RENI). Positions 2569 to 2584 (PETQLSGTPDTCQSEF) are enriched in polar residues. Residues 2595–2606 (RMSSSSNHESAS) are compositionally biased toward low complexity. A compositionally biased stretch (polar residues) spans 2607–2617 (LENPAQDQSWM). The segment covering 2653-2664 (KGPKSQVLERNK) has biased composition (basic and acidic residues). A compositionally biased stretch (acidic residues) spans 2806–2816 (DNLDSPDEIDI). Over residues 2840–2849 (ANKSSGQESE) the composition is skewed to polar residues. Residues 2879 to 3040 (DMKVIEPYRR…SIIKYDEEKS (162 aa)) form the CRAL-TRIO domain.

This sequence belongs to the PPase class C family. Prune subfamily.

The protein localises to the cytoplasm. May play an important role in regulating differentiation, survival and aggressiveness of the tumor cells. This Mus musculus (Mouse) protein is Protein prune homolog 2 (Prune2).